Here is a 261-residue protein sequence, read N- to C-terminus: 3-methyl-2-oxobutanoate hydroxymethyltransferase (261 aa).

Residues Asp44 and Asp83 each contribute to the Mg(2+) site. Residues 44-45 (DS), Asp83, and Lys112 contribute to the 3-methyl-2-oxobutanoate site. Glu114 contacts Mg(2+). Glu181 serves as the catalytic Proton acceptor.

The protein belongs to the PanB family. Homodecamer; pentamer of dimers. Mg(2+) serves as cofactor.

The protein resides in the cytoplasm. It catalyses the reaction 3-methyl-2-oxobutanoate + (6R)-5,10-methylene-5,6,7,8-tetrahydrofolate + H2O = 2-dehydropantoate + (6S)-5,6,7,8-tetrahydrofolate. It participates in cofactor biosynthesis; (R)-pantothenate biosynthesis; (R)-pantoate from 3-methyl-2-oxobutanoate: step 1/2. Its function is as follows. Catalyzes the reversible reaction in which hydroxymethyl group from 5,10-methylenetetrahydrofolate is transferred onto alpha-ketoisovalerate to form ketopantoate. The polypeptide is 3-methyl-2-oxobutanoate hydroxymethyltransferase (Acidithiobacillus ferrooxidans (strain ATCC 23270 / DSM 14882 / CIP 104768 / NCIMB 8455) (Ferrobacillus ferrooxidans (strain ATCC 23270))).